The primary structure comprises 333 residues: Sphingomyelinase C (333 aa).

The first 27 residues, 1 to 27 (MKGKLLKGVLSLGVGLGALYSGTSAQA), serve as a signal peptide directing secretion. Cysteines 150 and 186 form a disulfide.

It belongs to the neutral sphingomyelinase family. It depends on Mg(2+) as a cofactor.

It is found in the secreted. It catalyses the reaction a sphingomyelin + H2O = phosphocholine + an N-acylsphing-4-enine + H(+). Its activity is regulated as follows. Activated by cobalt and manganese ions. Its function is as follows. Required, with sphingomyelinase, to effect target cell lysis (hemolysis). This Bacillus cereus protein is Sphingomyelinase C (sph).